Consider the following 127-residue polypeptide: UPF0102 protein Reut_A3265 (127 aa).

Belongs to the UPF0102 family.

This is UPF0102 protein Reut_A3265 from Cupriavidus pinatubonensis (strain JMP 134 / LMG 1197) (Cupriavidus necator (strain JMP 134)).